The sequence spans 142 residues: MAKKVQAYIKLQVAAGMANPSPPVGPALGQQGVNIMEFCKAFNAKTESVEKGLPIPVVITVYADRSFTFVTKTPPAAILLKKAAGVKSGSGKPNKEKVGKVTTAQVREIAETKAADLTGADVEAMMRSIEGTARSMGLVVED.

This sequence belongs to the universal ribosomal protein uL11 family. In terms of assembly, part of the ribosomal stalk of the 50S ribosomal subunit. Interacts with L10 and the large rRNA to form the base of the stalk. L10 forms an elongated spine to which L12 dimers bind in a sequential fashion forming a multimeric L10(L12)X complex. In terms of processing, one or more lysine residues are methylated.

In terms of biological role, forms part of the ribosomal stalk which helps the ribosome interact with GTP-bound translation factors. The sequence is that of Large ribosomal subunit protein uL11 from Proteus mirabilis (strain HI4320).